The primary structure comprises 875 residues: E3 SUMO-protein ligase SIZ1 (875 aa).

The region spanning 12-46 (LAYFRIKELKDILNQLGLPKQGKKQDLIDRVLALL) is the SAP domain. The PHD-type zinc finger occupies 114-169 (KVRCICSSTMVNDSMIQCEDQRCQVWQHLNCVLIPDKPGESAEVPPVFYCELCRLS). An SP-RING-type zinc finger spans residues 349 to 430 (SDLEVVAESV…FNRITSLLRN (82 aa)). Residues cysteine 380, histidine 382, cysteine 403, and cysteine 406 each coordinate Zn(2+). The interval 796 to 820 (GGGGNEEPAPADVNSQPQIPSTETG) is disordered. A compositionally biased stretch (polar residues) spans 808–819 (VNSQPQIPSTET).

Belongs to the PIAS family.

It is found in the nucleus. Its pathway is protein modification; protein sumoylation. Its function is as follows. Probable SUMO E3 ligase that may regulate Pi starvation responses. This chain is E3 SUMO-protein ligase SIZ1 (SIZ1), found in Oryza sativa subsp. japonica (Rice).